Here is a 269-residue protein sequence, read N- to C-terminus: Expansin-B11 (269 aa).

A signal peptide spans 1 to 30 (MTVVSIMWSLVQVQVLVAVALAFLVGGAWC). Asn40 carries N-linked (GlcNAc...) asparagine glycosylation. In terms of domain architecture, Expansin-like EG45 spans 69 to 175 (GGGCGYKDVN…RRVKCKYGSK (107 aa)). Intrachain disulfides connect Cys72-Cys100, Cys103-Cys170, and Cys108-Cys114. Positions 187–268 (NYLALLVKYV…GWKPNTAYTA (82 aa)) constitute an Expansin-like CBD domain.

The protein belongs to the expansin family. Expansin B subfamily. In terms of tissue distribution, expressed in pollen.

Its subcellular location is the secreted. It is found in the cell wall. The protein localises to the membrane. Its function is as follows. May aid fertilization by loosening the cell wall of the stigma and style, thereby facilitating penetration of the pollen tube. Acts selectively on grass cell walls, which are relatively poor in pectins and xyloglucans and rich in glucuronoarabinoxylans and (1-3),(1-4)-beta-D-glucans, when compared with cell walls of other angiosperms, including other monocots. This Zea mays (Maize) protein is Expansin-B11 (EXPB11).